The sequence spans 337 residues: Holliday junction branch migration complex subunit RuvB (337 aa).

Positions 1 to 180 (MTRLISADKS…FGVISRLEFY (180 aa)) are large ATPase domain (RuvB-L). ATP contacts are provided by residues L19, R20, G61, K64, T65, T66, 127-129 (EDF), R170, Y180, and R217. T65 lines the Mg(2+) pocket. Residues 181–251 (THDELAFIIT…VADQALALLE (71 aa)) form a small ATPAse domain (RuvB-S) region. Residues 254-337 (EMGFDMMDRA…APEPPQGKLF (84 aa)) are head domain (RuvB-H). DNA contacts are provided by R309 and R314.

This sequence belongs to the RuvB family. As to quaternary structure, homohexamer. Forms an RuvA(8)-RuvB(12)-Holliday junction (HJ) complex. HJ DNA is sandwiched between 2 RuvA tetramers; dsDNA enters through RuvA and exits via RuvB. An RuvB hexamer assembles on each DNA strand where it exits the tetramer. Each RuvB hexamer is contacted by two RuvA subunits (via domain III) on 2 adjacent RuvB subunits; this complex drives branch migration. In the full resolvosome a probable DNA-RuvA(4)-RuvB(12)-RuvC(2) complex forms which resolves the HJ.

The protein localises to the cytoplasm. It catalyses the reaction ATP + H2O = ADP + phosphate + H(+). In terms of biological role, the RuvA-RuvB-RuvC complex processes Holliday junction (HJ) DNA during genetic recombination and DNA repair, while the RuvA-RuvB complex plays an important role in the rescue of blocked DNA replication forks via replication fork reversal (RFR). RuvA specifically binds to HJ cruciform DNA, conferring on it an open structure. The RuvB hexamer acts as an ATP-dependent pump, pulling dsDNA into and through the RuvAB complex. RuvB forms 2 homohexamers on either side of HJ DNA bound by 1 or 2 RuvA tetramers; 4 subunits per hexamer contact DNA at a time. Coordinated motions by a converter formed by DNA-disengaged RuvB subunits stimulates ATP hydrolysis and nucleotide exchange. Immobilization of the converter enables RuvB to convert the ATP-contained energy into a lever motion, pulling 2 nucleotides of DNA out of the RuvA tetramer per ATP hydrolyzed, thus driving DNA branch migration. The RuvB motors rotate together with the DNA substrate, which together with the progressing nucleotide cycle form the mechanistic basis for DNA recombination by continuous HJ branch migration. Branch migration allows RuvC to scan DNA until it finds its consensus sequence, where it cleaves and resolves cruciform DNA. The sequence is that of Holliday junction branch migration complex subunit RuvB from Geobacter sp. (strain M21).